Here is a 257-residue protein sequence, read N- to C-terminus: Na(+)-translocating NADH-quinone reductase subunit C (257 aa).

Residues Leu-13 to Leu-33 traverse the membrane as a helical segment. An FMN phosphoryl threonine modification is found at Thr-224.

The protein belongs to the NqrC family. As to quaternary structure, composed of six subunits; NqrA, NqrB, NqrC, NqrD, NqrE and NqrF. FMN is required as a cofactor.

The protein localises to the cell inner membrane. The catalysed reaction is a ubiquinone + n Na(+)(in) + NADH + H(+) = a ubiquinol + n Na(+)(out) + NAD(+). NQR complex catalyzes the reduction of ubiquinone-1 to ubiquinol by two successive reactions, coupled with the transport of Na(+) ions from the cytoplasm to the periplasm. NqrA to NqrE are probably involved in the second step, the conversion of ubisemiquinone to ubiquinol. The polypeptide is Na(+)-translocating NADH-quinone reductase subunit C (Haemophilus ducreyi (strain 35000HP / ATCC 700724)).